A 165-amino-acid polypeptide reads, in one-letter code: Protein-export protein SecB (165 aa).

The protein belongs to the SecB family. As to quaternary structure, homotetramer, a dimer of dimers. One homotetramer interacts with 1 SecA dimer.

The protein resides in the cytoplasm. One of the proteins required for the normal export of preproteins out of the cell cytoplasm. It is a molecular chaperone that binds to a subset of precursor proteins, maintaining them in a translocation-competent state. It also specifically binds to its receptor SecA. The sequence is that of Protein-export protein SecB from Marinobacter nauticus (strain ATCC 700491 / DSM 11845 / VT8) (Marinobacter aquaeolei).